Reading from the N-terminus, the 387-residue chain is S-adenosylmethionine synthase (387 aa).

ATP is bound at residue H16. D18 contacts Mg(2+). E44 contributes to the K(+) binding site. E57 and Q100 together coordinate L-methionine. A flexible loop region spans residues 100–110; the sequence is QSPDIAQGVDR. ATP-binding positions include 167-169, 232-233, D241, 247-248, A264, and K268; these read DAK, RF, and RK. Residue D241 participates in L-methionine binding. Position 272 (K272) interacts with L-methionine.

The protein belongs to the AdoMet synthase family. Homotetramer; dimer of dimers. Mg(2+) serves as cofactor. The cofactor is K(+).

It localises to the cytoplasm. It carries out the reaction L-methionine + ATP + H2O = S-adenosyl-L-methionine + phosphate + diphosphate. The protein operates within amino-acid biosynthesis; S-adenosyl-L-methionine biosynthesis; S-adenosyl-L-methionine from L-methionine: step 1/1. Functionally, catalyzes the formation of S-adenosylmethionine (AdoMet) from methionine and ATP. The overall synthetic reaction is composed of two sequential steps, AdoMet formation and the subsequent tripolyphosphate hydrolysis which occurs prior to release of AdoMet from the enzyme. The sequence is that of S-adenosylmethionine synthase from Cupriavidus necator (strain ATCC 17699 / DSM 428 / KCTC 22496 / NCIMB 10442 / H16 / Stanier 337) (Ralstonia eutropha).